The primary structure comprises 598 residues: MTDSTTHDREMSAWQTHDHLDDPVIGELRNRFGPEAFSVQPTRTGMPVVWVKREQLLEVMAFLRQLPKPYVMLFDLHGMDERLRTHRQGLPAADFSVFYHLISIDRNRDIMLKVALAEQDLHLPTVTRLFPNANWYERETFDLFGITFDGHPHLTRLLMPRTWQGHPLRKDYPARATEFDPFELTRQKQDLEMESLKFRPEEWGMQRGTANEDFMFLNLGPNHPSSHGAFRIVLQLDGEDIVDCVPDIGYHHRGAEKMGERQSWHSYIPYTDRIEYLGGCVNEMPYVLAVEKLAGIEVPERVKVIRVMLSELFRINSHLLYISTFIQDVGAMTPVFFAFTDRQKIYDIVEAVTGFRMHPAWFRIGGVAHDLPKGWDRLLREFLEWMPKRLDSYVKAALHNSILKGRSIGVAAYGAKDALAWGTTGAGLRATGIAFDVRKWRPYSGYENFEFEVPTASNGDCYDRVMLKVEEIRQSLRILQQCLKNMPEGPFKADHPLTTPPPKERTLQHIDTLINHFLQVSWGPVMPANESFQMVEATKGINSYYLTSDGGTMSYRTRIRTPSYAHLQQIPSVIRGCLVSDLIVYLGSIDFVMSDVDR.

The segment at 1-189 (MTDSTTHDRE…DPFELTRQKQ (189 aa)) is NADH dehydrogenase I subunit C. Residues 213–598 (DFMFLNLGPN…IDFVMSDVDR (386 aa)) are NADH dehydrogenase I subunit D.

It in the N-terminal section; belongs to the complex I 30 kDa subunit family. The protein in the C-terminal section; belongs to the complex I 49 kDa subunit family. In terms of assembly, NDH-1 is composed of 13 different subunits. Subunits NuoB, CD, E, F, and G constitute the peripheral sector of the complex.

Its subcellular location is the cell inner membrane. It catalyses the reaction a quinone + NADH + 5 H(+)(in) = a quinol + NAD(+) + 4 H(+)(out). In terms of biological role, NDH-1 shuttles electrons from NADH, via FMN and iron-sulfur (Fe-S) centers, to quinones in the respiratory chain. The immediate electron acceptor for the enzyme in this species is believed to be ubiquinone. Couples the redox reaction to proton translocation (for every two electrons transferred, four hydrogen ions are translocated across the cytoplasmic membrane), and thus conserves the redox energy in a proton gradient. The sequence is that of NADH-quinone oxidoreductase subunit C/D from Edwardsiella ictaluri (strain 93-146).